The following is a 213-amino-acid chain: High frequency lysogenization protein HflD homolog (213 aa).

Residues 79-122 (QGLNAELTRYTLSLMVLERKLSSAKGALNTLGDRINGLQRQLDH) are a coiled coil.

It belongs to the HflD family.

The protein resides in the cytoplasm. It is found in the cell inner membrane. The polypeptide is High frequency lysogenization protein HflD homolog (Salmonella agona (strain SL483)).